The chain runs to 100 residues: Urease subunit gamma (100 aa).

The protein belongs to the urease gamma subunit family. As to quaternary structure, heterotrimer of UreA (gamma), UreB (beta) and UreC (alpha) subunits. Three heterotrimers associate to form the active enzyme.

Its subcellular location is the cytoplasm. It catalyses the reaction urea + 2 H2O + H(+) = hydrogencarbonate + 2 NH4(+). Its pathway is nitrogen metabolism; urea degradation; CO(2) and NH(3) from urea (urease route): step 1/1. The sequence is that of Urease subunit gamma from Paraburkholderia xenovorans (strain LB400).